The primary structure comprises 399 residues: MGNHTLLKQINKLLVLKTILDNKIISRTKISKLVDLNKATVSNLTDELIKEGYVVEKGYGKSKGGRRPVLLQVNKDVGSIIGIDLGVDYIHIILSNFVGEVIFEEYANMKIGEDKEKLLRLLFDLIEKSVKKAPQTPKGILGIGIGVPGIIEKESGTVLLAPNLKWQNVPLRSIVQQKFNLPVYIDNEANAGALGEKWFGEWGKVSDLIYLSVGIGLGAGIIIDNKLFRGAAGFAGEVGHTTINFQDDVCSCGNIGCLENFASERALLSVIKKLVKQGVEDRYISWENVDEITPSRIIQAAKEGSRVCRMAILEVAEKMGIGVANLVNIFNPEMVIIGNKASFFGELFLEKLREVINQRSFIAQFYNLKIEVSKLKDRAVVLGCIAMVISDMLSFPEYA.

The H-T-H motif DNA-binding region spans arginine 27–aspartate 46.

The protein belongs to the ROK (NagC/XylR) family.

Transcriptional repressor of xylose-utilizing enzymes. The chain is Xylose repressor (xylR) from Caldicellulosiruptor bescii (strain ATCC BAA-1888 / DSM 6725 / KCTC 15123 / Z-1320) (Anaerocellum thermophilum).